A 290-amino-acid chain; its full sequence is Glycine--tRNA ligase alpha subunit (290 aa).

The protein belongs to the class-II aminoacyl-tRNA synthetase family. Tetramer of two alpha and two beta subunits.

It localises to the cytoplasm. It catalyses the reaction tRNA(Gly) + glycine + ATP = glycyl-tRNA(Gly) + AMP + diphosphate. The chain is Glycine--tRNA ligase alpha subunit from Syntrophotalea carbinolica (strain DSM 2380 / NBRC 103641 / GraBd1) (Pelobacter carbinolicus).